The chain runs to 198 residues: Ribonuclease HII (198 aa).

The 190-residue stretch at 9–198 (ITVAGADEAG…LLPDQLKIDF (190 aa)) folds into the RNase H type-2 domain. Asp-15, Glu-16, and Asp-107 together coordinate a divalent metal cation.

This sequence belongs to the RNase HII family. Requires Mn(2+) as cofactor. It depends on Mg(2+) as a cofactor.

Its subcellular location is the cytoplasm. The enzyme catalyses Endonucleolytic cleavage to 5'-phosphomonoester.. Endonuclease that specifically degrades the RNA of RNA-DNA hybrids. This chain is Ribonuclease HII, found in Christiangramia forsetii (strain DSM 17595 / CGMCC 1.15422 / KT0803) (Gramella forsetii).